The primary structure comprises 151 residues: Large ribosomal subunit protein uL13 (151 aa).

It belongs to the universal ribosomal protein uL13 family. Part of the 50S ribosomal subunit.

In terms of biological role, this protein is one of the early assembly proteins of the 50S ribosomal subunit, although it is not seen to bind rRNA by itself. It is important during the early stages of 50S assembly. The polypeptide is Large ribosomal subunit protein uL13 (Mycoplasma mycoides subsp. mycoides SC (strain CCUG 32753 / NCTC 10114 / PG1)).